The following is a 110-amino-acid chain: Large ribosomal subunit protein uL24 (110 aa).

This sequence belongs to the universal ribosomal protein uL24 family. Part of the 50S ribosomal subunit.

One of two assembly initiator proteins, it binds directly to the 5'-end of the 23S rRNA, where it nucleates assembly of the 50S subunit. Its function is as follows. One of the proteins that surrounds the polypeptide exit tunnel on the outside of the subunit. The sequence is that of Large ribosomal subunit protein uL24 from Roseiflexus castenholzii (strain DSM 13941 / HLO8).